The chain runs to 342 residues: L-threonine 3-dehydrogenase (342 aa).

Zn(2+) is bound at residue Cys38. Catalysis depends on charge relay system residues Thr40 and His43. The Zn(2+) site is built by His63, Glu64, Cys93, Cys96, Cys99, and Cys107. NAD(+) contacts are provided by residues Ile175, Asp195, Arg200, 262–264 (LGI), and 286–287 (IY).

This sequence belongs to the zinc-containing alcohol dehydrogenase family. As to quaternary structure, homotetramer. Requires Zn(2+) as cofactor.

It localises to the cytoplasm. The enzyme catalyses L-threonine + NAD(+) = (2S)-2-amino-3-oxobutanoate + NADH + H(+). It participates in amino-acid degradation; L-threonine degradation via oxydo-reductase pathway; glycine from L-threonine: step 1/2. Catalyzes the NAD(+)-dependent oxidation of L-threonine to 2-amino-3-ketobutyrate. In Burkholderia lata (strain ATCC 17760 / DSM 23089 / LMG 22485 / NCIMB 9086 / R18194 / 383), this protein is L-threonine 3-dehydrogenase.